The following is a 30-amino-acid chain: Kappa-sparatoxin-Hv1d (30 aa).

Disulfide bonds link C3–C17, C10–C22, and C16–C26.

As to expression, expressed by the venom gland.

Its subcellular location is the secreted. Its function is as follows. Inhibitor of voltage-gated potassium channels of the Kv4/KCND family. Blocks calcium channels (Cav). This chain is Kappa-sparatoxin-Hv1d, found in Heteropoda venatoria (Brown huntsman spider).